We begin with the raw amino-acid sequence, 732 residues long: Bromodomain-containing factor 1 (732 aa).

The segment covering methionine 1–asparagine 22 has biased composition (polar residues). 5 disordered regions span residues methionine 1–glutamate 207, threonine 324–proline 380, asparagine 491–valine 517, arginine 556–glutamine 600, and valine 700–glutamate 732. A compositionally biased stretch (low complexity) spans serine 37–proline 51. Positions alanine 89–serine 100 are enriched in polar residues. The segment covering glutamate 137–valine 147 has biased composition (acidic residues). Residues proline 206 to valine 315 form the Bromo 1 domain. Over residues alanine 327–threonine 338 the composition is skewed to polar residues. Over residues lysine 370 to proline 380 the composition is skewed to basic and acidic residues. The Bromo 2 domain occupies lysine 383 to lysine 492. Positions alanine 529 to lysine 569 form a coiled coil. Over residues alanine 561–histidine 579 the composition is skewed to basic residues. Residues proline 590 to glutamine 600 show a composition bias toward pro residues. The region spanning proline 593 to glycine 672 is the NET domain. Residues glutamate 718 to glutamate 732 show a composition bias toward acidic residues.

Belongs to the BET family.

It localises to the nucleus. Transcription factor involved in the expression of a broad class of genes including snRNAs. Required for sporulation and DNA-damage repair. Prevents the spreading of SIR silencing at telomeres and protects histone H4, but not H3, from deacetylation. The sequence is that of Bromodomain-containing factor 1 (BDF1) from Candida albicans (strain SC5314 / ATCC MYA-2876) (Yeast).